The primary structure comprises 110 residues: T cell receptor alpha variable 35 (110 aa).

The first 19 residues, 1–19 (MLLEHLLIILWMQLTWVSG), serve as a signal peptide directing secretion. Positions 20 to 110 (QQLNQSPQSM…DVGIYFCAGQ (91 aa)) constitute an Ig-like domain. N-linked (GlcNAc...) asparagine glycosylation is found at Asn40 and Asn93. Cys41 and Cys107 form a disulfide bridge.

In terms of assembly, alpha-beta TR is a heterodimer composed of an alpha and beta chain; disulfide-linked. The alpha-beta TR is associated with the transmembrane signaling CD3 coreceptor proteins to form the TR-CD3 (TcR or TCR). The assembly of alpha-beta TR heterodimers with CD3 occurs in the endoplasmic reticulum where a single alpha-beta TR heterodimer associates with one CD3D-CD3E heterodimer, one CD3G-CD3E heterodimer and one CD247 homodimer forming a stable octameric structure. CD3D-CD3E and CD3G-CD3E heterodimers preferentially associate with TR alpha and TR beta chains, respectively. The association of the CD247 homodimer is the last step of TcR assembly in the endoplasmic reticulum and is required for transport to the cell surface.

It is found in the cell membrane. Functionally, v region of the variable domain of T cell receptor (TR) alpha chain that participates in the antigen recognition. Alpha-beta T cell receptors are antigen specific receptors which are essential to the immune response and are present on the cell surface of T lymphocytes. Recognize peptide-major histocompatibility (MH) (pMH) complexes that are displayed by antigen presenting cells (APC), a prerequisite for efficient T cell adaptive immunity against pathogens. Binding of alpha-beta TR to pMH complex initiates TR-CD3 clustering on the cell surface and intracellular activation of LCK that phosphorylates the ITAM motifs of CD3G, CD3D, CD3E and CD247 enabling the recruitment of ZAP70. In turn ZAP70 phosphorylates LAT, which recruits numerous signaling molecules to form the LAT signalosome. The LAT signalosome propagates signal branching to three major signaling pathways, the calcium, the mitogen-activated protein kinase (MAPK) kinase and the nuclear factor NF-kappa-B (NF-kB) pathways, leading to the mobilization of transcription factors that are critical for gene expression and essential for T cell growth and differentiation. The T cell repertoire is generated in the thymus, by V-(D)-J rearrangement. This repertoire is then shaped by intrathymic selection events to generate a peripheral T cell pool of self-MH restricted, non-autoaggressive T cells. Post-thymic interaction of alpha-beta TR with the pMH complexes shapes TR structural and functional avidity. The sequence is that of T cell receptor alpha variable 35 from Homo sapiens (Human).